A 229-amino-acid chain; its full sequence is ATP synthase subunit a (229 aa).

A run of 6 helical transmembrane segments spans residues 25–45 (ADAVVYTWLIMIGLVVLSIAA), 82–102 (FFPLVATLALFILVSNLIGLV), 104–124 (GFFPPTANINTTAACAVVVFV), 142–162 (FLGPIAWLAPMMFFIEVIGHL), 181–201 (LVLIIFFGLAPFIVPLPMMLM), and 202–222 (GVLVSFIQAFVFMLLAMIYIQ).

The protein belongs to the ATPase A chain family. In terms of assembly, F-type ATPases have 2 components, CF(1) - the catalytic core - and CF(0) - the membrane proton channel. CF(1) has five subunits: alpha(3), beta(3), gamma(1), delta(1), epsilon(1). CF(0) has three main subunits: a(1), b(2) and c(9-12). The alpha and beta chains form an alternating ring which encloses part of the gamma chain. CF(1) is attached to CF(0) by a central stalk formed by the gamma and epsilon chains, while a peripheral stalk is formed by the delta and b chains.

It localises to the cell inner membrane. Its function is as follows. Key component of the proton channel; it plays a direct role in the translocation of protons across the membrane. The protein is ATP synthase subunit a of Citrifermentans bemidjiense (strain ATCC BAA-1014 / DSM 16622 / JCM 12645 / Bem) (Geobacter bemidjiensis).